Here is a 337-residue protein sequence, read N- to C-terminus: Holliday junction branch migration complex subunit RuvB (337 aa).

A large ATPase domain (RuvB-L) region spans residues 1 to 179 (MTHQVAVLHQ…FAFSARLSYY (179 aa)). Residues leucine 18, arginine 19, glycine 60, lysine 63, threonine 64, serine 65, 126-128 (EDF), arginine 169, tyrosine 179, and arginine 216 each bind ATP. Threonine 64 provides a ligand contact to Mg(2+). Residues 180–250 (SDQDLKEILV…VAEKALAMLL (71 aa)) are small ATPAse domain (RuvB-S). The tract at residues 253-337 (DWGLNEIDIK…KNLLSLGEGQ (85 aa)) is head domain (RuvB-H). Lysine 308 and arginine 313 together coordinate DNA.

This sequence belongs to the RuvB family. In terms of assembly, homohexamer. Forms an RuvA(8)-RuvB(12)-Holliday junction (HJ) complex. HJ DNA is sandwiched between 2 RuvA tetramers; dsDNA enters through RuvA and exits via RuvB. An RuvB hexamer assembles on each DNA strand where it exits the tetramer. Each RuvB hexamer is contacted by two RuvA subunits (via domain III) on 2 adjacent RuvB subunits; this complex drives branch migration. In the full resolvosome a probable DNA-RuvA(4)-RuvB(12)-RuvC(2) complex forms which resolves the HJ.

It is found in the cytoplasm. The enzyme catalyses ATP + H2O = ADP + phosphate + H(+). Functionally, the RuvA-RuvB-RuvC complex processes Holliday junction (HJ) DNA during genetic recombination and DNA repair, while the RuvA-RuvB complex plays an important role in the rescue of blocked DNA replication forks via replication fork reversal (RFR). RuvA specifically binds to HJ cruciform DNA, conferring on it an open structure. The RuvB hexamer acts as an ATP-dependent pump, pulling dsDNA into and through the RuvAB complex. RuvB forms 2 homohexamers on either side of HJ DNA bound by 1 or 2 RuvA tetramers; 4 subunits per hexamer contact DNA at a time. Coordinated motions by a converter formed by DNA-disengaged RuvB subunits stimulates ATP hydrolysis and nucleotide exchange. Immobilization of the converter enables RuvB to convert the ATP-contained energy into a lever motion, pulling 2 nucleotides of DNA out of the RuvA tetramer per ATP hydrolyzed, thus driving DNA branch migration. The RuvB motors rotate together with the DNA substrate, which together with the progressing nucleotide cycle form the mechanistic basis for DNA recombination by continuous HJ branch migration. Branch migration allows RuvC to scan DNA until it finds its consensus sequence, where it cleaves and resolves cruciform DNA. In Chlamydia pneumoniae (Chlamydophila pneumoniae), this protein is Holliday junction branch migration complex subunit RuvB.